The chain runs to 647 residues: Pollen receptor-like kinase 2 (647 aa).

Positions 1–21 (MESKCLMFVSIVSVFFMVVNG) are cleaved as a signal peptide. 5 LRR repeats span residues 87-109 (LNSL…EFKK), 110-134 (LVAL…AFDG), 136-159 (GWLK…LVKS), 161-183 (KLIE…RHHP), and 185-203 (MLNL…SFST). Residues 248-268 (IVAAAVAALAASLIIIGVVIF) form a helical membrane-spanning segment. The Protein kinase domain occupies 338-613 (KASAEILGSG…EAVEKMEDLM (276 aa)). A Phosphoserine modification is found at Ser340. Residues 344-352 (LGSGCFGAS) and Lys366 contribute to the ATP site. Ser418 bears the Phosphoserine mark. Position 438 is a phosphothreonine (Thr438). Tyr508 carries the post-translational modification Phosphotyrosine. The tract at residues 620-647 (DDDFYSTYASEADGRSSRGLSSEGINLS) is disordered. The span at 637–647 (RGLSSEGINLS) shows a compositional bias: polar residues.

This sequence belongs to the protein kinase superfamily. Ser/Thr protein kinase family. In terms of assembly, part of a complex containing ROPGEF1 and ARAC11/ROP1. The interaction between PRK2, ROPGEF1 and ARAC11/ROP1 is phosphorylation-independent. Interacts with ROPGEF12 (via C-terminus). Interacts with ROPGEF1 (via PRONE domain). In terms of tissue distribution, expressed in pollen and/or in flowers, but not in leaves. Expressed in pollen tube.

Its subcellular location is the cell membrane. The catalysed reaction is L-seryl-[protein] + ATP = O-phospho-L-seryl-[protein] + ADP + H(+). The enzyme catalyses L-threonyl-[protein] + ATP = O-phospho-L-threonyl-[protein] + ADP + H(+). The phosphorylation activity is calcium-independent. In terms of biological role, receptor-like kinase involved in the control of pollen germination and pollen tube polar growth. Phosphorylates ROPGEF1 in its C-terminal region, releasing its auto-inhibition, and thereby activating the ROP1 signaling pathway. May act as a scaffolding protein, recruiting ROPGEF12 to the plasma membrane by binding to its C-terminal domain. Phosphorylates ROPGEF12, releasing its auto-inhibition. This chain is Pollen receptor-like kinase 2, found in Arabidopsis thaliana (Mouse-ear cress).